The following is a 464-amino-acid chain: Argininosuccinate lyase (464 aa).

This sequence belongs to the lyase 1 family. Argininosuccinate lyase subfamily.

It localises to the cytoplasm. The catalysed reaction is 2-(N(omega)-L-arginino)succinate = fumarate + L-arginine. The protein operates within amino-acid biosynthesis; L-arginine biosynthesis; L-arginine from L-ornithine and carbamoyl phosphate: step 3/3. The sequence is that of Argininosuccinate lyase from Koribacter versatilis (strain Ellin345).